The chain runs to 583 residues: Pescadillo (583 aa).

A coiled-coil region spans residues 275–329 (EKLSALSASLARMVASVEEEEAELDHFPTEGEDQEKMEVREKMEQQQSKQKKLFE). One can recognise a BRCT domain in the interval 323–416 (KQKKLFEGLK…IQLPVEEYFL (94 aa)). 2 disordered regions span residues 448-526 (RGEK…EEKA) and 558-583 (ANKL…KKKC). Positions 455–489 (EEDEEEEGEEEEDDEEDEEDDEQSEDEEEAEEEAN) are enriched in acidic residues. Residues 512-526 (AKAENRARAAEEEKA) are compositionally biased toward basic and acidic residues.

The protein belongs to the pescadillo family. In terms of assembly, component of the PeBoW complex, composed of bop1, pes1 and wdr12. The complex is held together by bop1, which interacts with pes1 via its N-terminal domain and with wdr12 via a high-affinity interaction between the seven-bladed beta-propeller domains of the 2 proteins. The PeBoW complex associates with the 66S pre-ribosome.

The protein resides in the nucleus. Its subcellular location is the nucleolus. The protein localises to the nucleoplasm. In terms of biological role, component of the PeBoW complex, which is required for maturation of 28S and 5.8S ribosomal RNAs and formation of the 60S ribosome. The protein is Pescadillo (pes) of Danio rerio (Zebrafish).